A 131-amino-acid chain; its full sequence is Lactose permease (131 aa).

At M1–N13 the chain is on the cytoplasmic side. Residues F14–F34 form a helical membrane-spanning segment. Topologically, residues F35–T50 are periplasmic. The helical transmembrane segment at G51–M71 threads the bilayer. The Cytoplasmic segment spans residues S72–H80. Residues L81–S101 traverse the membrane as a helical segment. Position 102 (P102) is a topological domain, periplasmic. Residues L103–F123 form a helical membrane-spanning segment. Topologically, residues S124–S131 are cytoplasmic.

Belongs to the major facilitator superfamily. Oligosaccharide:H(+) symporter (OHS) (TC 2.A.1.5) family.

Its subcellular location is the cell inner membrane. The catalysed reaction is lactose(in) + H(+)(in) = lactose(out) + H(+)(out). Responsible for transport of beta-galactosides into the cell, with the concomitant import of a proton (symport system). This is Lactose permease (lacY) from Klebsiella pneumoniae.